Here is a 163-residue protein sequence, read N- to C-terminus: Regulator of chromosome segregation (163 aa).

Interacts with CpsD and ParB.

Its subcellular location is the cytoplasm. It localises to the nucleoid. The protein resides in the cell membrane. Functionally, required for cell division and chromosome segregation. Binds to DNA and is involved in segregating the origin of replication (oriC) region to new daughter cells. When the nucleoid is not properly segregated, involved in blocking the cell division to protect the nucleoid against premature truncation by the newly forming septum, a function which is dependent on CpsD and its autophosphorylation level. This is Regulator of chromosome segregation from Streptococcus pneumoniae serotype 2 (strain D39 / NCTC 7466).